The following is a 535-amino-acid chain: UDP-glycosyltransferase stmC (535 aa).

2 N-linked (GlcNAc...) asparagine glycosylation sites follow: asparagine 70 and asparagine 422. A helical transmembrane segment spans residues 506–526 (ASNLDLYIVCIAFVAVPVGVA).

This sequence belongs to the glycosyltransferase 28 family.

It is found in the membrane. The catalysed reaction is stromemycin aglycone + UDP-alpha-D-glucose = stromemycin + UDP + H(+). It carries out the reaction exophillate aglycone + UDP-alpha-D-glucose = exophillate + UDP + H(+). Its pathway is mycotoxin biosynthesis. In terms of biological role, UDP-glycosyltransferase; part of the gene cluster that mediates the biosynthesis of stromemycin, a depside C-glucoside with two unsaturated C9 side chains belonging to aromatic polyketide glycosides. Acts as the tailoring enzyme responsible for 3-C-glucosylation of bininalkenylresorcylic acid produced by the combined action of the HR-PKS stmA and the NR-PKS stmB to yield stromemycin. Possesses a relatively strict acceptor specificity towards bininalkenylresorcylic acid for C-glycosylation, but is able to use several donors including UDP-alpha-D-galactose, UDP-alpha-D-xylose, UDP-alpha-D-4-keto-6-deoxyglucose, UDP-alpha-D-quinovose, and UDP-beta-L-rhamnose. In Aspergillus ustus, this protein is UDP-glycosyltransferase stmC.